The primary structure comprises 289 residues: Shikimate kinase (289 aa).

Position 84-94 (84-94) interacts with ATP; sequence PMASGLSSSSA.

Belongs to the GHMP kinase family. Archaeal shikimate kinase subfamily.

It is found in the cytoplasm. It catalyses the reaction shikimate + ATP = 3-phosphoshikimate + ADP + H(+). Its pathway is metabolic intermediate biosynthesis; chorismate biosynthesis; chorismate from D-erythrose 4-phosphate and phosphoenolpyruvate: step 5/7. The protein is Shikimate kinase of Methanobrevibacter smithii (strain ATCC 35061 / DSM 861 / OCM 144 / PS).